The primary structure comprises 673 residues: Annexin A6 (673 aa).

N-acetylalanine is present on A2. Residue S13 is modified to Phosphoserine. Annexin repeat units lie at residues 20–91 (FDAN…NLMR), 92–163 (PLAY…VLLQ), 175–247 (DLVQ…AVVK), 251–322 (STPE…KLCG), 363–434 (FNPD…GLMM), 435–506 (PPAH…SLAT), 521–595 (EDAQ…AIVQ), and 599–670 (NKPL…ALCG). A Phosphotyrosine modification is found at Y30. 4 positions are modified to N6-acetyllysine: K63, K68, K75, and K81. A Phosphotyrosine modification is found at Y201. 3 positions are modified to N6-acetyllysine: K306, K370, and K418. Residue S422 is modified to Phosphoserine. K483 is subject to N6-acetyllysine. S537 bears the Phosphoserine mark. K620 bears the N6-acetyllysine mark.

It belongs to the annexin family.

The protein localises to the cytoplasm. Its subcellular location is the melanosome. Functionally, may associate with CD21. May regulate the release of Ca(2+) from intracellular stores. This Mus musculus (Mouse) protein is Annexin A6 (Anxa6).